The sequence spans 220 residues: Small ribosomal subunit protein uS2 (220 aa).

The segment at 201-220 (LPPDGDLPEPPSEFEVKFKR) is disordered.

Belongs to the universal ribosomal protein uS2 family.

This Staphylothermus marinus (strain ATCC 43588 / DSM 3639 / JCM 9404 / F1) protein is Small ribosomal subunit protein uS2.